The following is a 1030-amino-acid chain: MNGTTSPIAARSKRKEPPHTVDGRHPKHHRTNGEVAPAADNTPDNQDEFEGEFGVELEEYEDARLPAVLPTGPDTAEWQATIQRVVRNVVSIRFCQTCSFDTDPALTSEATGFVVDAERGYILTNRHVVGSGPFWGYCIFDNHEEVDAYPVYRDPVHDFGILKFDPKAIKYMPVDALPLRPDLAKVGIEIRVVGNDAGEKLSILSGVISRLDRNAPEYGEGYSDFNTCYYQASAAASGGSSGSPVVNMDGYAVALQAGGRADGAATDYFLPLDRPLRALKCLQEGNPITRGDIQCQFVLKPFDECRRLGLTPEWEAQIRKAFPKETNMLVAEIVLPEGPSHKKAEEGDVLIKVNGELLTQFIRLDDILDSSVGKPVKLLLLRGGEEIEVEIEVGDLHSITPDRFVSVAGGSFHSLSYQQARLYGVACKGVFVCEAGGSFRFDNAENGWLIQTVDHKKTPDLETFIEVMKGIHDKARVVVTYKHLRDLHTLNTTILHIDRHWSKKMKLAVRNDETGLWDFTNLADPLPPVAPIPRKADFIQLEHTSHPAVADLVRSFVHVSCVMPVKLDGFPKNRKWGMGLVIDADKGLVVISRAIVPYDLCDITVTIADSIVVEGKVVFLHPLQNYAIIQYDPKLVDAPVLSARLSSQEITQGASTYFIGYNRIGRIVHAATTVTEIFAVTIPANSGAPRYRAVNVDAITVDTSLSGQCGSGVLVAQDGTVQALWLTYLGERNPSTHRDEEYHLGLATPTLLPVVEQIQRGVDPKLRMLSVEFRAIQMSQARLMGVSEEWIQKVSVANTAHHQLFMVTKRTFERNEQEEAAALLEGDVVLSLNGKIITKISDLDIMYSNEQLDAVLVRNCEELSLKLDTVAADDVETTRAVSFCGAIFHAPHHAVRQQISKLFSEVYVSARTRGSPSYQYGLAPTNFITHVNGKPTPDLEAFLAEVVKIPDNTYFRLRAMSFDSVPWVVTMKKNDHYFPTMELIKDPKEECGWRRITYEGGKVIQGEGPDGVVGSAGEITDMDVDADVCG.

Residues 1–48 (MNGTTSPIAARSKRKEPPHTVDGRHPKHHRTNGEVAPAADNTPDNQDE) are disordered. A compositionally biased stretch (basic and acidic residues) spans 15-24 (KEPPHTVDGR). The tract at residues 89–279 (VVSIRFCQTC…LPLDRPLRAL (191 aa)) is serine protease. Residues histidine 127, aspartate 158, and serine 240 each act as charge relay system in the active site. 2 consecutive PDZ domains span residues 312–384 (PEWE…LRGG) and 880–960 (AVSF…LRAM).

This sequence belongs to the peptidase S1C family.

The protein resides in the nucleus. Its function is as follows. Nuclear serine protease which mediates apoptosis. The sequence is that of Pro-apoptotic serine protease NMA111 (NMA111) from Chaetomium globosum (strain ATCC 6205 / CBS 148.51 / DSM 1962 / NBRC 6347 / NRRL 1970) (Soil fungus).